The sequence spans 79 residues: Translation initiation factor IF-1, chloroplastic (79 aa).

Residues 1-74 (MTRKNIDLIE…HRGRITFRLR (74 aa)) enclose the S1-like domain.

The protein belongs to the IF-1 family. As to quaternary structure, component of the 30S ribosomal translation pre-initiation complex which assembles on the 30S ribosome in the order IF-2 and IF-3, IF-1 and N-formylmethionyl-tRNA(fMet); mRNA recruitment can occur at any time during PIC assembly.

The protein resides in the plastid. Its subcellular location is the chloroplast. One of the essential components for the initiation of protein synthesis. Stabilizes the binding of IF-2 and IF-3 on the 30S subunit to which N-formylmethionyl-tRNA(fMet) subsequently binds. Helps modulate mRNA selection, yielding the 30S pre-initiation complex (PIC). Upon addition of the 50S ribosomal subunit IF-1, IF-2 and IF-3 are released leaving the mature 70S translation initiation complex. The protein is Translation initiation factor IF-1, chloroplastic of Chlorella vulgaris (Green alga).